Reading from the N-terminus, the 249-residue chain is 2,3-bisphosphoglycerate-dependent phosphoglycerate mutase (249 aa).

Substrate is bound by residues 8–15, 21–22, arginine 60, 87–90, lysine 98, 114–115, and 183–184; these read RHGESTWN, TG, ERHY, RR, and GN. Histidine 9 functions as the Tele-phosphohistidine intermediate in the catalytic mechanism. Glutamate 87 serves as the catalytic Proton donor/acceptor.

Belongs to the phosphoglycerate mutase family. BPG-dependent PGAM subfamily. Homodimer.

The enzyme catalyses (2R)-2-phosphoglycerate = (2R)-3-phosphoglycerate. The protein operates within carbohydrate degradation; glycolysis; pyruvate from D-glyceraldehyde 3-phosphate: step 3/5. Its function is as follows. Catalyzes the interconversion of 2-phosphoglycerate and 3-phosphoglycerate. The protein is 2,3-bisphosphoglycerate-dependent phosphoglycerate mutase of Aromatoleum aromaticum (strain DSM 19018 / LMG 30748 / EbN1) (Azoarcus sp. (strain EbN1)).